Reading from the N-terminus, the 281-residue chain is MKVLWAALLIALLAGCQGKMEQVVEPELEPEPELHQQADWQSGQPWELALGRFWDYLRWVQTLSEQVQEELLSSQVTQELTALMDETMKELKAYKSELEEQLSPVAEETRARLSKELQAAQARLGADMEDVRSRLAQYRSEVQAMLGQSTDELRARLTSHLRKLRTVSYTHLDVYKRQSLASQPLQERAQAWGERLRTRMEEVGSRTRDRLDEVKEQVEEVRAKLEEQAQQMRLQAEAFQARLKSWFEPLVEDMQRQWAGLVEKVQAAVGASAAPVPSDNH.

An N-terminal signal peptide occupies residues 1 to 18; the sequence is MKVLWAALLIALLAGCQG. A run of 5 repeats spans residues 82-103, 104-125, 126-147, 148-169, and 198-219. The tract at residues 82 to 219 is 5 X 22 AA approximate tandem repeats; the sequence is ALMDETMKEL…RLDEVKEQVE (138 aa). At M145 the chain carries Methionine sulfoxide. A Phosphoserine modification is found at S149. The segment at 160-170 is LDL and other lipoprotein receptors binding; it reads HLRKLRTVSYT. Heparin contacts are provided by residues 164-167 and 193-200; these read LRTV and GERLRTRM. The homooligomerization stretch occupies residues 230–281; the sequence is QQMRLQAEAFQARLKSWFEPLVEDMQRQWAGLVEKVQAAVGASAAPVPSDNH. Residues 242–254 are specificity for association with VLDL; that stretch reads RLKSWFEPLVEDM.

This sequence belongs to the apolipoprotein A1/A4/E family. As to quaternary structure, homotetramer. May interact with ABCA1; functionally associated with ABCA1 in the biogenesis of HDLs. May interact with APP/A4 amyloid-beta peptide; the interaction is extremely stable in vitro but its physiological significance is unclear. May interact with MAPT. May interact with MAP2. In the cerebrospinal fluid, interacts with secreted SORL1. Interacts with PMEL; this allows the loading of PMEL luminal fragment on ILVs to induce fibril nucleation. APOE exists as multiple glycosylated and sialylated glycoforms within cells and in plasma. The extent of glycosylation and sialylation are tissue and context specific. In terms of processing, glycated in plasma VLDL. Post-translationally, phosphorylated by FAM20C in the extracellular medium.

Its subcellular location is the secreted. The protein localises to the extracellular space. It localises to the extracellular matrix. It is found in the extracellular vesicle. The protein resides in the endosome. Its subcellular location is the multivesicular body. In terms of biological role, APOE is an apolipoprotein, a protein associating with lipid particles, that mainly functions in lipoprotein-mediated lipid transport between organs via the plasma and interstitial fluids. APOE is a core component of plasma lipoproteins and is involved in their production, conversion and clearance. Apolipoproteins are amphipathic molecules that interact both with lipids of the lipoprotein particle core and the aqueous environment of the plasma. As such, APOE associates with chylomicrons, chylomicron remnants, very low density lipoproteins (VLDL) and intermediate density lipoproteins (IDL) but shows a preferential binding to high-density lipoproteins (HDL). It also binds a wide range of cellular receptors including the LDL receptor/LDLR, the LDL receptor-related proteins LRP1, LRP2 and LRP8 and the very low-density lipoprotein receptor/VLDLR that mediate the cellular uptake of the APOE-containing lipoprotein particles. Finally, APOE also has a heparin-binding activity and binds heparan-sulfate proteoglycans on the surface of cells, a property that supports the capture and the receptor-mediated uptake of APOE-containing lipoproteins by cells. A main function of APOE is to mediate lipoprotein clearance through the uptake of chylomicrons, VLDLs, and HDLs by hepatocytes. APOE is also involved in the biosynthesis by the liver of VLDLs as well as their uptake by peripheral tissues ensuring the delivery of triglycerides and energy storage in muscle, heart and adipose tissues. By participating in the lipoprotein-mediated distribution of lipids among tissues, APOE plays a critical role in plasma and tissues lipid homeostasis. APOE is also involved in two steps of reverse cholesterol transport, the HDLs-mediated transport of cholesterol from peripheral tissues to the liver, and thereby plays an important role in cholesterol homeostasis. First, it is functionally associated with ABCA1 in the biogenesis of HDLs in tissues. Second, it is enriched in circulating HDLs and mediates their uptake by hepatocytes. APOE also plays an important role in lipid transport in the central nervous system, regulating neuron survival and sprouting. The chain is Apolipoprotein E (APOE) from Aotus nancymaae (Ma's night monkey).